The primary structure comprises 290 residues: RIO-type serine/threonine-protein kinase Rio1 (290 aa).

The interval 1 to 22 is disordered; the sequence is MTDEFGMVEPQEGEAFGDEWEE. Residues 11–22 are compositionally biased toward acidic residues; it reads QEGEAFGDEWEE. One can recognise a Protein kinase domain in the interval 79 to 290; that stretch reads DAFGGPISTG…DEGEDGDGDE (212 aa). ATP is bound by residues 85-93, K107, E175, and V177; that span reads ISTGKEANV. The active-site Proton acceptor is the D218. Mg(2+)-binding residues include N223 and D235. D235 acts as the 4-aspartylphosphate intermediate in catalysis.

Belongs to the protein kinase superfamily. RIO-type Ser/Thr kinase family. Mg(2+) is required as a cofactor. Mn(2+) serves as cofactor. Autophosphorylated.

The enzyme catalyses L-seryl-[protein] + ATP = O-phospho-L-seryl-[protein] + ADP + H(+). The catalysed reaction is L-threonyl-[protein] + ATP = O-phospho-L-threonyl-[protein] + ADP + H(+). It carries out the reaction ATP + H2O = ADP + phosphate + H(+). Serine/threonine-protein kinase that is able to autophosphorylate as well as to phosphorylate proteasome subunit alpha 1 (PsmA1) in vitro. Despite the protein kinase domain is proposed to act predominantly as an ATPase. The polypeptide is RIO-type serine/threonine-protein kinase Rio1 (rio1) (Haloferax volcanii (strain ATCC 29605 / DSM 3757 / JCM 8879 / NBRC 14742 / NCIMB 2012 / VKM B-1768 / DS2) (Halobacterium volcanii)).